Here is a 347-residue protein sequence, read N- to C-terminus: Purine-rich element-binding protein gamma (347 aa).

Disordered regions lie at residues 1 to 34 (MERA…YPQA) and 133 to 169 (GHRQ…HPHS). The span at 9–24 (GGGGRGRGGKNVGGSG) shows a compositional bias: gly residues. Residues 51-293 (AGGAAEIQEL…GIFLKVSEVR (243 aa)) mediate DNA binding. Positions 134–146 (HRQEHGHSKEQGS) are enriched in basic and acidic residues. A phosphoserine mark is found at Ser-160, Ser-163, and Ser-339.

Belongs to the PUR DNA-binding protein family. In terms of tissue distribution, isoform 1 is expressed in testis and glioblastoma. Isoform 2 is expressed in fetal lung.

It localises to the nucleus. In Homo sapiens (Human), this protein is Purine-rich element-binding protein gamma (PURG).